Here is a 443-residue protein sequence, read N- to C-terminus: Chromosomal replication initiator protein DnaA (443 aa).

The domain I, interacts with DnaA modulators stretch occupies residues 1 to 67 (MDAWSRSLER…RELLAHFAGF (67 aa)). The domain II stretch occupies residues 67-105 (FSDVFLEIGSRPRPVEAQNAPFSTPSAHVSSEPQVPFAG). The segment at 106–323 (NLDNHYTFAN…GALNTLTARA (218 aa)) is domain III, AAA+ region. ATP contacts are provided by G151, G153, K154, and T155. The domain IV, binds dsDNA stretch occupies residues 324 to 443 (NFTGRAITTE…WDKLIRKLSE (120 aa)).

The protein belongs to the DnaA family. In terms of assembly, oligomerizes as a right-handed, spiral filament on DNA at oriC.

The protein localises to the cytoplasm. Plays an essential role in the initiation and regulation of chromosomal replication. ATP-DnaA binds to the origin of replication (oriC) to initiate formation of the DNA replication initiation complex once per cell cycle. Binds the DnaA box (a 9 base pair repeat at the origin) and separates the double-stranded (ds)DNA. Forms a right-handed helical filament on oriC DNA; dsDNA binds to the exterior of the filament while single-stranded (ss)DNA is stabiized in the filament's interior. The ATP-DnaA-oriC complex binds and stabilizes one strand of the AT-rich DNA unwinding element (DUE), permitting loading of DNA polymerase. After initiation quickly degrades to an ADP-DnaA complex that is not apt for DNA replication. Binds acidic phospholipids. In Stenotrophomonas maltophilia (strain R551-3), this protein is Chromosomal replication initiator protein DnaA.